Reading from the N-terminus, the 654-residue chain is DNA-directed RNA polymerase III subunit RPC3 (654 aa).

Thr-27 is subject to Phosphothreonine. 2 disordered regions span residues 381 to 401 and 422 to 448; these read LSRK…ASLP and KSLQ…EDPH. Ser-392 and Ser-394 each carry phosphoserine. Residues 429 to 444 are compositionally biased toward acidic residues; it reads DTQEEDEEEEDLDADT. The segment at 581 to 602 is leucine-zipper; sequence LEWNMANLLFKKEKLKQENSTL.

Belongs to the RNA polymerase beta chain family. In terms of assembly, component of the RNA polymerase III (Pol III) complex consisting of 17 subunits.

Its subcellular location is the cytoplasm. It localises to the nucleus. Functionally, DNA-dependent RNA polymerase catalyzes the transcription of DNA into RNA using the four ribonucleoside triphosphates as substrates. Specific core component of RNA polymerase III which synthesizes small RNAs, such as 5S rRNA and tRNAs. The polypeptide is DNA-directed RNA polymerase III subunit RPC3 (RPC82) (Saccharomyces cerevisiae (strain YJM789) (Baker's yeast)).